A 63-amino-acid polypeptide reads, in one-letter code: Beta-defensin 6 (63 aa).

A signal peptide spans 1 to 22; that stretch reads MKIHYLLFAFILVMLSPLAAFS. A Pyrrolidone carboxylic acid modification is found at Gln-23. 3 cysteine pairs are disulfide-bonded: Cys-31–Cys-59, Cys-38–Cys-52, and Cys-42–Cys-60.

It belongs to the beta-defensin family. As to expression, predominantly expressed in skeletal muscle, also expressed in esophagus, tongue, and trachea. Also expressed in lung when induced by lipopolysaccharide.

The protein localises to the secreted. Has potent antibacterial activity against E.coli (ATCC 25922). The protein is Beta-defensin 6 (Defb6) of Mus musculus (Mouse).